We begin with the raw amino-acid sequence, 410 residues long: Cysteine desulfurase IscS (410 aa).

Pyridoxal 5'-phosphate-binding positions include 80 to 81 (AT), N160, Q188, and 208 to 210 (SGH). K211 carries the N6-(pyridoxal phosphate)lysine modification. T248 is a binding site for pyridoxal 5'-phosphate. C334 acts as the Cysteine persulfide intermediate in catalysis. [2Fe-2S] cluster is bound at residue C334.

This sequence belongs to the class-V pyridoxal-phosphate-dependent aminotransferase family. NifS/IscS subfamily. In terms of assembly, homodimer. Forms a heterotetramer with IscU, interacts with other sulfur acceptors. The cofactor is pyridoxal 5'-phosphate.

Its subcellular location is the cytoplasm. It catalyses the reaction (sulfur carrier)-H + L-cysteine = (sulfur carrier)-SH + L-alanine. It participates in cofactor biosynthesis; iron-sulfur cluster biosynthesis. Its function is as follows. Master enzyme that delivers sulfur to a number of partners involved in Fe-S cluster assembly, tRNA modification or cofactor biosynthesis. Catalyzes the removal of elemental sulfur atoms from cysteine to produce alanine. Functions as a sulfur delivery protein for Fe-S cluster synthesis onto IscU, an Fe-S scaffold assembly protein, as well as other S acceptor proteins. The polypeptide is Cysteine desulfurase IscS (Rickettsia conorii (strain ATCC VR-613 / Malish 7)).